The sequence spans 381 residues: Cytochrome b (381 aa).

4 consecutive transmembrane segments (helical) span residues 31–51 (FGFLSSICLIVQILTGIFLAM), 75–97 (WLLRYIHTNGASMFFIVVYIHIF), 112–132 (VWVIGVLILLLMILTAFIGYV), and 178–198 (FFSLHYLMPFVIAAVSLVHLA). 2 residues coordinate heme b: His-81 and His-95. Heme b is bound by residues His-182 and His-196. His-201 lines the a ubiquinone pocket. A run of 4 helical transmembrane segments spans residues 224–244 (FIVKDFLGMVIFIIFFSIFVY), 288–308 (LGGVTAMISAIAILAFLPWIH), 320–340 (LYRLFYWVMISCCLILGWIGG), and 347–367 (YVIIGQIASIYYFIYFIILLP).

Belongs to the cytochrome b family. In terms of assembly, the main subunits of complex b-c1 are: cytochrome b, cytochrome c1 and the Rieske protein. Heme b is required as a cofactor.

The protein localises to the mitochondrion inner membrane. Component of the ubiquinol-cytochrome c reductase complex (complex III or cytochrome b-c1 complex) that is part of the mitochondrial respiratory chain. The b-c1 complex mediates electron transfer from ubiquinol to cytochrome c. Contributes to the generation of a proton gradient across the mitochondrial membrane that is then used for ATP synthesis. The polypeptide is Cytochrome b (MT-CYB) (Chondrus crispus (Carrageen Irish moss)).